The chain runs to 99 residues: DNA-directed RNA polymerase subunit Rpo11 (99 aa).

It belongs to the archaeal Rpo11/eukaryotic RPB11/RPC19 RNA polymerase subunit family. As to quaternary structure, part of the RNA polymerase complex.

Its subcellular location is the cytoplasm. The catalysed reaction is RNA(n) + a ribonucleoside 5'-triphosphate = RNA(n+1) + diphosphate. DNA-dependent RNA polymerase (RNAP) catalyzes the transcription of DNA into RNA using the four ribonucleoside triphosphates as substrates. This Aeropyrum pernix (strain ATCC 700893 / DSM 11879 / JCM 9820 / NBRC 100138 / K1) protein is DNA-directed RNA polymerase subunit Rpo11.